Here is a 183-residue protein sequence, read N- to C-terminus: Probable RNA 2'-phosphotransferase (183 aa).

The protein belongs to the KptA/TPT1 family.

Functionally, removes the 2'-phosphate from RNA via an intermediate in which the phosphate is ADP-ribosylated by NAD followed by a presumed transesterification to release the RNA and generate ADP-ribose 1''-2''-cyclic phosphate (APPR&gt;P). May function as an ADP-ribosylase. The polypeptide is Probable RNA 2'-phosphotransferase (Pyrococcus furiosus (strain ATCC 43587 / DSM 3638 / JCM 8422 / Vc1)).